Consider the following 227-residue polypeptide: Cytochrome c biogenesis ATP-binding export protein CcmA (227 aa).

An ABC transporter domain is found at 26-227; it reads LAASGLGFSR…ARTLRLDARS (202 aa). 58 to 65 lines the ATP pocket; the sequence is GANGSGKT.

Belongs to the ABC transporter superfamily. CcmA exporter (TC 3.A.1.107) family. The complex is composed of two ATP-binding proteins (CcmA) and two transmembrane proteins (CcmB).

The protein resides in the cell inner membrane. The enzyme catalyses heme b(in) + ATP + H2O = heme b(out) + ADP + phosphate + H(+). Part of the ABC transporter complex CcmAB involved in the biogenesis of c-type cytochromes; once thought to export heme, this seems not to be the case, but its exact role is uncertain. Responsible for energy coupling to the transport system. This Cupriavidus necator (strain ATCC 17699 / DSM 428 / KCTC 22496 / NCIMB 10442 / H16 / Stanier 337) (Ralstonia eutropha) protein is Cytochrome c biogenesis ATP-binding export protein CcmA.